The primary structure comprises 111 residues: Large ribosomal subunit protein uL24 (111 aa).

Belongs to the universal ribosomal protein uL24 family. As to quaternary structure, part of the 50S ribosomal subunit.

Functionally, one of two assembly initiator proteins, it binds directly to the 5'-end of the 23S rRNA, where it nucleates assembly of the 50S subunit. In terms of biological role, one of the proteins that surrounds the polypeptide exit tunnel on the outside of the subunit. The protein is Large ribosomal subunit protein uL24 of Chlamydia pneumoniae (Chlamydophila pneumoniae).